A 274-amino-acid polypeptide reads, in one-letter code: Penicillin-insensitive murein endopeptidase (274 aa).

The signal sequence occupies residues 1-19 (MKKTAIALLAWFVSSASLA). 3 disulfides stabilise this stretch: Cys-44–Cys-265, Cys-187–Cys-235, and Cys-216–Cys-223. Zn(2+) contacts are provided by His-110, His-113, Asp-120, Asp-147, His-150, and His-211. The interval 225–274 (DQPLPPPGDGCGAELQSWFEPPKLGTTKPEKKTPPPLPPSCQALLDEHVL) is disordered.

This sequence belongs to the peptidase M74 family. In terms of assembly, dimer. The cofactor is Zn(2+).

Its subcellular location is the periplasm. Functionally, murein endopeptidase that cleaves the D-alanyl-meso-2,6-diamino-pimelyl amide bond that connects peptidoglycan strands. Likely plays a role in the removal of murein from the sacculus. The polypeptide is Penicillin-insensitive murein endopeptidase (Salmonella paratyphi B (strain ATCC BAA-1250 / SPB7)).